The chain runs to 2014 residues: Fatty acid synthase beta subunit pigK (2014 aa).

The tract at residues 144 to 515 is acetyltransferase (AT) domain; it reads LAAVFGGQST…KDGQGVRVII (372 aa). The For acetyltransferase activity role is filled by Ser263. Positions 570–815 are enoyl reductase (ER) domain; the sequence is SRLLDTPPLM…LITEASGVSD (246 aa). Residues 1126-1606 are dehydratase (DH) domain; it reads RSGSPWIHAL…LPGDRLLVNV (481 aa). In terms of domain architecture, MaoC-like spans 1514-1627; the sequence is PGWPGVSSLE…FNVSAFKQAT (114 aa). A malonyl/palmitoyl transferase (MT/PT) domain region spans residues 1645 to 2005; that stretch reads FFFTGQGSQK…VREVFNITQS (361 aa). Ser1790 functions as the For malonyltransferase activity in the catalytic mechanism.

The protein belongs to the fungal fatty acid synthetase subunit beta family. As to quaternary structure, [Alpha(6)beta(6)] hexamers of two multifunctional subunits (alpha and beta).

It carries out the reaction acetyl-CoA + n malonyl-CoA + 2n NADPH + 4n H(+) = a long-chain-acyl-CoA + n CoA + n CO2 + 2n NADP(+).. The enzyme catalyses holo-[ACP] + acetyl-CoA = acetyl-[ACP] + CoA. It catalyses the reaction holo-[ACP] + malonyl-CoA = malonyl-[ACP] + CoA. The catalysed reaction is a (3R)-hydroxyacyl-[ACP] = a (2E)-enoyl-[ACP] + H2O. It carries out the reaction a 2,3-saturated acyl-[ACP] + NAD(+) = a (2E)-enoyl-[ACP] + NADH + H(+). The enzyme catalyses (9Z)-octadecenoyl-[ACP] + H2O = (9Z)-octadecenoate + holo-[ACP] + H(+). It functions in the pathway secondary metabolite biosynthesis. In terms of biological role, fatty acid synthase subunit beta; part of the gene cluster that mediates the biosynthesis of azaphilone pigments (MonAzPs), a complex mixture of compounds with a common azaphilone skeleton very widely used as food colorants. PigJ and pigK form the two subunits of a dedicated fungal fatty acid synthase (FAS) that produces the side chain fatty acyl moiety of MonAzPs, a beta-keto fatty acid. The chain length control of the pigJ-pigK FAS is somewhat flexible as MonAzPs features either a beta-ketooctanoic or a beta-ketodecanoic acid moiety. The beta-ketoacyl-ACP probably serves as the substrate for the acetyltransferase pigD that directly transfers the fatty acyl chain to the C-4 alcohol of the pyran ring. The first step of the pathway is performed by the nrPKS pigA that forms the hexaketide precursor from successive condensations of five malonyl-CoA units, with a simple acetyl-CoA starter unit. The role of esterase pigG is not clear, but it may play at most a supplementary role in the formation of the benzaldehyde produced by the pigA nrPKS. This very reactive benzaldehyde is intercepted by the pigC ketoreductase that to provide the first stable enzyme-free MonAzPs intermediate, 6-(4-hydroxy-2-oxopentyl)-3-methyl-2,4-dioxocyclohexane carbaldehyde, also known as M7PKS-1. The FAD-dependent monooxygenase pigN hydroxylates M7PKS-1 at C-4, which triggers the formation of the pyran ring. PigJ, pigK and pigD are involved in the acetylation of the pyran ring. PigJ and pigK form the two subunits of a dedicated fungal FAS that produces the side chain fatty acyl moiety of MonAzPs and pigD transfers the fatty acyl chain to the C-4 alcohol. PigM and pigO are involved in the elimination of the omega-1 alcohol. PigM acts as an O-acetyltransferase that synthesizes the putative O-11 acetyl intermediate whereas pigO eliminates acetic acid to yield an intermediate with a C10(11) double bond. The dehydration of the C-11 alcohol followed by the reduction of the C6(7) double bond by the NAD(P)H-dependent oxidoreductase pigE increases the electrophilicity of the C-5 ketone of the resulting acyl benzopyran. This in turn sets up the C-5 ketone for an intramolecular Knoevenagel aldol condensation with the C-20 enol of the side chain. This condensation affords the characteristic linear tricyclic carbon skeletons of the yellow pigments that serve as the common precursors for the classical yellow pigments monascin and ankaflavin, orange pigments rubopunctatin and monascorubrin, and red pigments ribropunctamine and monascorubramine. The FAD-dependent oxidoreductase pigF is especially invoved in the biosynthesis of orange and red pigments via desaturation of C6(7). In Monascus ruber (Mold), this protein is Fatty acid synthase beta subunit pigK.